Consider the following 226-residue polypeptide: tRNA (guanine-N(7)-)-methyltransferase (226 aa).

Positions 59, 84, 111, and 134 each coordinate S-adenosyl-L-methionine. Aspartate 134 is an active-site residue. Substrate is bound at residue lysine 138. The interaction with RNA stretch occupies residues 140-145 (RHNKRR). Substrate is bound by residues aspartate 170 and 205–208 (TKFE).

It belongs to the class I-like SAM-binding methyltransferase superfamily. TrmB family.

The enzyme catalyses guanosine(46) in tRNA + S-adenosyl-L-methionine = N(7)-methylguanosine(46) in tRNA + S-adenosyl-L-homocysteine. The protein operates within tRNA modification; N(7)-methylguanine-tRNA biosynthesis. Functionally, catalyzes the formation of N(7)-methylguanine at position 46 (m7G46) in tRNA. The sequence is that of tRNA (guanine-N(7)-)-methyltransferase from Chromobacterium violaceum (strain ATCC 12472 / DSM 30191 / JCM 1249 / CCUG 213 / NBRC 12614 / NCIMB 9131 / NCTC 9757 / MK).